A 104-amino-acid chain; its full sequence is Protein P3 (104 aa).

A helical transmembrane segment spans residues 77–99; it reads LVFGVPQKTLLLGFGGLLVLGLV.

Homodimer.

The protein localises to the virion membrane. This chain is Protein P3 (III), found in Pseudoalteromonas phage PM2 (Bacteriophage PM2).